The primary structure comprises 107 residues: Phosphoribosyl-ATP pyrophosphatase (107 aa).

It belongs to the PRA-PH family.

It localises to the cytoplasm. It catalyses the reaction 1-(5-phospho-beta-D-ribosyl)-ATP + H2O = 1-(5-phospho-beta-D-ribosyl)-5'-AMP + diphosphate + H(+). The protein operates within amino-acid biosynthesis; L-histidine biosynthesis; L-histidine from 5-phospho-alpha-D-ribose 1-diphosphate: step 2/9. This chain is Phosphoribosyl-ATP pyrophosphatase, found in Sinorhizobium fredii (strain NBRC 101917 / NGR234).